The primary structure comprises 581 residues: MKSHTQSLLAESLNALKQQGIVPADFEARIQVDRTKDKSHGDFATNLAMMLTKAAGKNPREIAQLLIDNLPESAHVEKVEIAGPGFINFFIDDNALANQLMVALNSDHLGLELPTPQTVVVDYSSPNLAKEMHVGHLRSTIIGDSVVRALEFMGHKVIRQNHVGDWGTQFGMLLAYMEELRAANGEQAKMELSDLENFYRAAKVRFDESAEFATRARKLVVELQSGDEYCNKLWREFNDISLSHCHELYERLGVSLTRADVRGESAYNSDLAQVVADLDAQGLLSESNGAKVVFQDEFKNKEGEPLPVIIQKADGGYLYATSDLAAMRYRSNVLNADRALYFVDLRQALHFQQVFKLAKTAKFVREEMSFEHMGFGTMNGEDGRPFKTRSGGVVKLIDLLKEADTRALDLVRSKNPDMDEAELAEIARVVGIASVKYADLSKNRASDYIFSFEQMLSFEGNTAPYLLYAYTRVAGIFKRAQDVDLSDATIILEHEKEKDLGTKLAQFGEVMTRMVGKGQPHALCGYLFELAGAFSSFYEACPVLAAETEESKKSRLLLSQLTAKTLKQGLNLLGLETLERM.

The short motif at 126 to 136 is the 'HIGH' region element; that stretch reads PNLAKEMHVGH.

The protein belongs to the class-I aminoacyl-tRNA synthetase family. As to quaternary structure, monomer.

Its subcellular location is the cytoplasm. The catalysed reaction is tRNA(Arg) + L-arginine + ATP = L-arginyl-tRNA(Arg) + AMP + diphosphate. The protein is Arginine--tRNA ligase of Shewanella halifaxensis (strain HAW-EB4).